A 249-amino-acid chain; its full sequence is Small ribosomal subunit protein uS3 (249 aa).

Residues 39–107 enclose the KH type-2 domain; it reads VRAMLKKRLY…EVHLNIVEIR (69 aa). The disordered stretch occupies residues 215-249; sequence LDKRLATESGPAGEGGGRERGDRPDRGDRGRRDRG. A compositionally biased stretch (basic and acidic residues) spans 230 to 249; the sequence is GGRERGDRPDRGDRGRRDRG.

The protein belongs to the universal ribosomal protein uS3 family. Part of the 30S ribosomal subunit. Forms a tight complex with proteins S10 and S14.

In terms of biological role, binds the lower part of the 30S subunit head. Binds mRNA in the 70S ribosome, positioning it for translation. The polypeptide is Small ribosomal subunit protein uS3 (Caulobacter sp. (strain K31)).